The sequence spans 431 residues: MAQFYSAKRRVTTRQIITVKVNDLDSFGQGVARHNGKALFIPGLLPEESAEVIITEDKKQFARARVSRRLNDSPERETPRCPHFGVCGGCQQQHVGIDLQQRSKSAALARLMKHEVNDIIAGAPWGYRRRARLSLNCPPDKPLQMGFRKAGSSDIVNVEQCPVLAPQLAALLPRIRACLASLHGTRHLGHVELVQAGSGTLMILRHTAPLSAADKEKLERFSHSEGLSLFLAPFSEILETVSGEAPWYDSHGLRLAFSPRDFIQVNEAVNQQMVARALEWLDVRAEDRVLDLFCGMGNFTLPLATRAASVVGVEGVPALVEKGRENAIRNGLHNVTFFHENLEEDVTKQPWAKNGFDKVLLDPARAGATGVMRHIIKLKPIRIVYVSCNPATLARDSEALVNAGYEVTRLAMLDMFPHTGHLESMVLFERM.

The TRAM domain maps to 10-68 (RVTTRQIITVKVNDLDSFGQGVARHNGKALFIPGLLPEESAEVIITEDKKQFARARVSR). [4Fe-4S] cluster contacts are provided by Cys81, Cys87, Cys90, and Cys161. Gln264, Phe293, Asn298, Glu314, Asn341, and Asp362 together coordinate S-adenosyl-L-methionine. Cys388 acts as the Nucleophile in catalysis.

It belongs to the class I-like SAM-binding methyltransferase superfamily. RNA M5U methyltransferase family. RlmD subfamily.

It catalyses the reaction uridine(1939) in 23S rRNA + S-adenosyl-L-methionine = 5-methyluridine(1939) in 23S rRNA + S-adenosyl-L-homocysteine + H(+). Functionally, catalyzes the formation of 5-methyl-uridine at position 1939 (m5U1939) in 23S rRNA. The chain is 23S rRNA (uracil(1939)-C(5))-methyltransferase RlmD from Salmonella paratyphi A (strain ATCC 9150 / SARB42).